We begin with the raw amino-acid sequence, 407 residues long: Tyrosine--tRNA ligase (407 aa).

Y35 serves as a coordination point for L-tyrosine. The 'HIGH' region motif lies at 40–49; it reads PTADSLHVGH. Positions 168 and 172 each coordinate L-tyrosine. A 'KMSKS' region motif is present at residues 228–232; it reads KMGKT. K231 contacts ATP. The region spanning 341 to 405 is the S4 RNA-binding domain; sequence NSLVDLLAKC…RGKKNFNRIV (65 aa).

The protein belongs to the class-I aminoacyl-tRNA synthetase family. TyrS type 1 subfamily. As to quaternary structure, homodimer.

It is found in the cytoplasm. It catalyses the reaction tRNA(Tyr) + L-tyrosine + ATP = L-tyrosyl-tRNA(Tyr) + AMP + diphosphate + H(+). Catalyzes the attachment of tyrosine to tRNA(Tyr) in a two-step reaction: tyrosine is first activated by ATP to form Tyr-AMP and then transferred to the acceptor end of tRNA(Tyr). This is Tyrosine--tRNA ligase from Clostridium botulinum (strain Loch Maree / Type A3).